We begin with the raw amino-acid sequence, 588 residues long: Adenine deaminase (588 aa).

The protein belongs to the metallo-dependent hydrolases superfamily. Adenine deaminase family. As to quaternary structure, homodimer. The cofactor is Mn(2+).

It carries out the reaction adenine + H2O + H(+) = hypoxanthine + NH4(+). The sequence is that of Adenine deaminase from Escherichia coli O7:K1 (strain IAI39 / ExPEC).